The sequence spans 212 residues: Ribonuclease HII (212 aa).

An RNase H type-2 domain is found at M1 to Q206. Residues D7, E8, and D100 each coordinate a divalent metal cation.

The protein belongs to the RNase HII family. Requires Mn(2+) as cofactor. The cofactor is Mg(2+).

It localises to the cytoplasm. The catalysed reaction is Endonucleolytic cleavage to 5'-phosphomonoester.. Its function is as follows. Endonuclease that specifically degrades the RNA of RNA-DNA hybrids. In Halobacterium salinarum (strain ATCC 29341 / DSM 671 / R1), this protein is Ribonuclease HII.